The primary structure comprises 487 residues: N-succinylglutamate 5-semialdehyde dehydrogenase (487 aa).

Glycine 221–glycine 226 contributes to the NAD(+) binding site. Active-site residues include glutamate 244 and cysteine 278.

Belongs to the aldehyde dehydrogenase family. AstD subfamily.

The catalysed reaction is N-succinyl-L-glutamate 5-semialdehyde + NAD(+) + H2O = N-succinyl-L-glutamate + NADH + 2 H(+). Its pathway is amino-acid degradation; L-arginine degradation via AST pathway; L-glutamate and succinate from L-arginine: step 4/5. Catalyzes the NAD-dependent reduction of succinylglutamate semialdehyde into succinylglutamate. This Pseudomonas putida (strain ATCC 47054 / DSM 6125 / CFBP 8728 / NCIMB 11950 / KT2440) protein is N-succinylglutamate 5-semialdehyde dehydrogenase.